The primary structure comprises 119 residues: Putative ankyrin repeat domain-containing protein 26-like 1 (119 aa).

A coiled-coil region spans residues 15–112; it reads EKEEDLLHKN…EKQSRQRLTK (98 aa).

This chain is Putative ankyrin repeat domain-containing protein 26-like 1 (ANKRD36BP1), found in Homo sapiens (Human).